The chain runs to 445 residues: UNC93-like protein MFSD11 (445 aa).

The helical transmembrane segment at 8–28 (LLNIVILGVGFMFMFTAFQTS) threads the bilayer. An N-linked (GlcNAc...) asparagine glycan is attached at Asn40. 4 consecutive transmembrane segments (helical) span residues 52–72 (LAII…VIAV), 74–94 (GCQM…AMFI), 98–118 (TWSF…LWTA), and 138–158 (IFWA…YLAW). The N-linked (GlcNAc...) asparagine glycan is linked to Asn163. Transmembrane regions (helical) follow at residues 170–190 (RTVF…FFLI), 239–259 (MLLL…YSGV), 277–297 (LIGL…GLFG), 309–329 (PVVI…YLYM), 343–363 (LSAF…LLGL), 385–405 (APAF…AFFY), and 415–435 (LLIL…VEWG).

It belongs to the unc-93 family.

It localises to the membrane. The protein is UNC93-like protein MFSD11 (mfsd11) of Xenopus laevis (African clawed frog).